Here is a 1235-residue protein sequence, read N- to C-terminus: ATP-dependent helicase/nuclease subunit A (1235 aa).

The UvrD-like helicase ATP-binding domain maps to 12–482; that stretch reads TLWTDDQWKA…IDLSQNFRSR (471 aa). 33-40 is a binding site for ATP; sequence AAAGSGKT. The 292-residue stretch at 509 to 800 folds into the UvrD-like helicase C-terminal domain; the sequence is AAELTLGANF…RMMTIHASKG (292 aa).

This sequence belongs to the helicase family. AddA subfamily. In terms of assembly, heterodimer of AddA and AddB/RexB. It depends on Mg(2+) as a cofactor.

It catalyses the reaction Couples ATP hydrolysis with the unwinding of duplex DNA by translocating in the 3'-5' direction.. The catalysed reaction is ATP + H2O = ADP + phosphate + H(+). Functionally, the heterodimer acts as both an ATP-dependent DNA helicase and an ATP-dependent, dual-direction single-stranded exonuclease. Recognizes the chi site generating a DNA molecule suitable for the initiation of homologous recombination. The AddA nuclease domain is required for chi fragment generation; this subunit has the helicase and 3' -&gt; 5' nuclease activities. In Listeria welshimeri serovar 6b (strain ATCC 35897 / DSM 20650 / CCUG 15529 / CIP 8149 / NCTC 11857 / SLCC 5334 / V8), this protein is ATP-dependent helicase/nuclease subunit A.